Consider the following 305-residue polypeptide: C alpha-dehydrogenase (305 aa).

Residue phenylalanine 10–valine 34 participates in NAD(+) binding. Serine 144 contributes to the substrate binding site. Tyrosine 157 functions as the Proton acceptor in the catalytic mechanism.

Belongs to the short-chain dehydrogenases/reductases (SDR) family.

It participates in secondary metabolite metabolism; lignin degradation. Catalyzes the C alpha dehydrogenation of arylglycerol-beta-aryl ether (C alpha alcohol type) (compound IV). This Sphingobium sp. (strain NBRC 103272 / SYK-6) protein is C alpha-dehydrogenase (ligD).